The chain runs to 424 residues: Double homeobox protein 4 (424 aa).

Residues 1 to 10 (MALPTPSDST) are compositionally biased toward polar residues. Disordered stretches follow at residues 1–24 (MALP…RRRL), 72–102 (SRQL…TAVT), 218–362 (LQPS…LQEP), and 388–414 (QPLL…PLSE). DNA-binding regions (homeobox) lie at residues 19–78 (GRRR…LRQH) and 94–153 (GRRK…PGQG). Over residues 265-274 (KSREDRDPQR) the composition is skewed to basic and acidic residues. 2 stretches are compositionally biased toward low complexity: residues 278–302 (PGPC…LAPP) and 319–329 (AGAAWEPQAGA). The required for interaction with EP300 and CREBBP, and for transcriptional activation of target genes stretch occupies residues 327-424 (AGAAPPPQPA…EEYRALLEEL (98 aa)). The tract at residues 405 to 424 (AASLEAPLSEEEYRALLEEL) is important for transcriptional activation of target genes.

It belongs to the paired homeobox family. Binds DNA as a monomer. Interacts (via C-terminus) with EP300 and CREBBP. In terms of tissue distribution, isoform 1: Does not seem to be expressed in normal muscle, but is detected in muscle of individuals with FSHD, and also in testis (at protein level). Isoform 1: Does not seem to be expressed in normal muscle, but in muscle of individuals with FSHD, where it may be toxic to cells. Isoform 2: Detected in skeletal muscle, fibroblasts and testis from healthy individuals.

The protein resides in the nucleus. Its subcellular location is the cytoplasm. Transcription factor that is selectively and transiently expressed in cleavage-stage embryos. Binds to double-stranded DNA elements with the consensus sequence 5'-TAATCTAATCA-3'. Binds to chromatin containing histone H3 acetylated at 'Lys-27' (H3K27ac) and promotes deacetylation of H3K27ac. In parallel, binds to chromatin that lacks histone H3 acetylation at 'Lys-27' (H3K27ac) and recruits EP300 and CREBBP to promote acetylation of histone H3 at 'Lys-27' at new sites. Involved in transcriptional regulation of numerous genes, primarily as transcriptional activator, but also mediates repression of a set of target genes. Promotes expression of ZSCAN4 and KDM4E, two proteins with essential roles during early embryogenesis. Promotes nuclear translocation of CTNNB1/beta-catenin and its subsequent activation of target genes. Heterologous expression in cultured embryonic stem cells mediates transcription of HERVL retrotransposons and transcripts derived from ACRO1 and HSATII satellite repeats. May activate expression of PITX1. May regulate microRNA (miRNA) expression. Inappropriate expression can inhibit myogenesis and promote apoptosis. In terms of biological role, probably inactive as a transcriptional activator, due to the absence of the C-terminal region that is important for transcriptional activation. Can inhibit transcriptional activation mediated by isoform 1. Heterologous expression of isoform 2 has no deleterious effect on cell survival. This chain is Double homeobox protein 4, found in Homo sapiens (Human).